Consider the following 257-residue polypeptide: Receptor expression-enhancing protein 4 (257 aa).

The next 2 membrane-spanning stretches (helical) occupy residues 1-21 and 42-62; these read MVSW…CPAY and WIVF…ISWF. Phosphoserine occurs at positions 152 and 194. Positions 183–257 are disordered; the sequence is PIGYRAGGLQ…KKTVPSDVDS (75 aa). The residue at position 196 (Thr196) is a Phosphothreonine. Ser202 is modified (phosphoserine). Residue Thr250 is modified to Phosphothreonine. A Phosphoserine modification is found at Ser253.

It belongs to the DP1 family. In terms of tissue distribution, expressed in circumvallate papillae and testis.

The protein resides in the endoplasmic reticulum membrane. Its function is as follows. Microtubule-binding protein required to ensure proper cell division and nuclear envelope reassembly by sequestering the endoplasmic reticulum away from chromosomes during mitosis. Probably acts by clearing the endoplasmic reticulum membrane from metaphase chromosomes. This Homo sapiens (Human) protein is Receptor expression-enhancing protein 4 (REEP4).